We begin with the raw amino-acid sequence, 434 residues long: Putative nuclease OPG089 (434 aa).

It belongs to the XPG/RAD2 endonuclease family. FEN1 subfamily. Mg(2+) serves as cofactor.

The protein resides in the virion. In terms of biological role, putative nuclease that seems to be required for double-strand break repair, homologous recombination, and production of full-length viral genomic DNA. The protein is Putative nuclease OPG089 (OPG089) of Monkeypox virus.